Consider the following 140-residue polypeptide: Ribosome maturation factor RimP (140 aa).

It belongs to the RimP family.

It localises to the cytoplasm. Functionally, required for maturation of 30S ribosomal subunits. The chain is Ribosome maturation factor RimP from Campylobacter jejuni subsp. jejuni serotype O:2 (strain ATCC 700819 / NCTC 11168).